We begin with the raw amino-acid sequence, 360 residues long: MNIYDQLQAVEDRYEELGELLSDPEVVSDTKRFMALSKEEASTRETVAAYRQYKAIIQSIDDAEEMIKEAGGDPDIEEMAKEELKEAKAAKETYEDKLKLLLLPKDPNDDKNIILEIRGAAGGDEAALFAGDLLAMYQKFAESQGWRFEVMEASYNGVGGIKEVVAMVSGQSVYSKLKYESGAHRVQRVPVTESQGRVHTSTATVLVMPEVEEVEYDIDPKDLRIDIYHASGAGGQNVNKVATAVRIVHLPTNIKVEMQEERTQQKNRDKAMKIIRARVADHFAQIAQDEQDAERKSTIGTGDRSERIRTYNFPQNRVTDHRIGLTLQKLDTILSGKLDEIVDALVLYDQTQKLESLNNQ.

Glutamine 236 carries the post-translational modification N5-methylglutamine. The interval glutamine 288–isoleucine 308 is disordered. The span at alanine 293 to isoleucine 308 shows a compositional bias: basic and acidic residues.

It belongs to the prokaryotic/mitochondrial release factor family. Post-translationally, methylated by PrmC. Methylation increases the termination efficiency of RF1.

It localises to the cytoplasm. Functionally, peptide chain release factor 1 directs the termination of translation in response to the peptide chain termination codons UAG and UAA. The protein is Peptide chain release factor 1 of Streptococcus equi subsp. zooepidemicus (strain H70).